The following is a 91-amino-acid chain: Large ribosomal subunit protein bL27 (91 aa).

A disordered region spans residues 1-21; it reads MAHKKAGGSSRNGRDSESKRL.

This sequence belongs to the bacterial ribosomal protein bL27 family.

This is Large ribosomal subunit protein bL27 from Azoarcus sp. (strain BH72).